A 298-amino-acid chain; its full sequence is N-acetylmuramic acid 6-phosphate etherase (298 aa).

One can recognise an SIS domain in the interval 55–218; it reads IHAQVSGGGR…STGLMIKSGK (164 aa). The active-site Proton donor is the Glu83. Glu114 is an active-site residue.

It belongs to the GCKR-like family. MurNAc-6-P etherase subfamily. As to quaternary structure, homodimer.

The enzyme catalyses N-acetyl-D-muramate 6-phosphate + H2O = N-acetyl-D-glucosamine 6-phosphate + (R)-lactate. It functions in the pathway amino-sugar metabolism; N-acetylmuramate degradation. Its pathway is amino-sugar metabolism; 1,6-anhydro-N-acetylmuramate degradation. It participates in cell wall biogenesis; peptidoglycan recycling. In terms of biological role, specifically catalyzes the cleavage of the D-lactyl ether substituent of MurNAc 6-phosphate, producing GlcNAc 6-phosphate and D-lactate. Together with AnmK, is also required for the utilization of anhydro-N-acetylmuramic acid (anhMurNAc) either imported from the medium or derived from its own cell wall murein, and thus plays a role in cell wall recycling. This is N-acetylmuramic acid 6-phosphate etherase from Escherichia coli (strain K12 / MC4100 / BW2952).